A 435-amino-acid polypeptide reads, in one-letter code: Mitochondrial association factor 1 form a1 (435 aa).

Residues 1–20 (MWRIWRCRLSFLFATGCLLG) form the signal peptide. The Vacuolar segment spans residues 21–95 (ALTAGLGSQM…SVTARRRRNR (75 aa)). Positions 43–88 (GVADASQEAGDVVEERTERTEEQVFAPGPPRRHSSESLFPRNASVT) are disordered. A compositionally biased stretch (basic and acidic residues) spans 55 to 64 (VEERTERTEE). The chain crosses the membrane as a helical span at residues 96–116 (RIAPIATAVGVAVILAALYVL). The Cytoplasmic segment spans residues 117-435 (RRRRAQPPQE…ERKYKFPQGD (319 aa)). The disordered stretch occupies residues 120-162 (RAQPPQEPEPPTRLRTPRPRAPSEQQQPSESEPPAEVPMTPDP). Over residues 141 to 153 (PSEQQQPSESEPP) the composition is skewed to low complexity.

Interacts with host SAMM50.

The protein resides in the parasitophorous vacuole membrane. In terms of biological role, during host cell infection by tachyzoites, does not play a role in tethering the parasitophorous vacuole to the host mitochondria, probably because it does not bind host mitochondrial import protein TOMM70. This is Mitochondrial association factor 1 form a1 from Toxoplasma gondii.